The chain runs to 249 residues: Small ribosomal subunit protein uS3 (249 aa).

The KH type-2 domain maps to 39 to 107; sequence VRAMLKKRLY…EVHLNIVEIR (69 aa). Positions 215–249 are disordered; the sequence is LDKRLATESGPAGEGGGRERGDRPDRGDRGRRDRG. The span at 230 to 249 shows a compositional bias: basic and acidic residues; it reads GGRERGDRPDRGDRGRRDRG.

It belongs to the universal ribosomal protein uS3 family. As to quaternary structure, part of the 30S ribosomal subunit. Forms a tight complex with proteins S10 and S14.

Its function is as follows. Binds the lower part of the 30S subunit head. Binds mRNA in the 70S ribosome, positioning it for translation. The chain is Small ribosomal subunit protein uS3 from Caulobacter sp. (strain K31).